A 65-amino-acid chain; its full sequence is Large ribosomal subunit protein bL35 (65 aa).

The protein belongs to the bacterial ribosomal protein bL35 family.

The chain is Large ribosomal subunit protein bL35 from Ruminiclostridium cellulolyticum (strain ATCC 35319 / DSM 5812 / JCM 6584 / H10) (Clostridium cellulolyticum).